A 327-amino-acid polypeptide reads, in one-letter code: 4-hydroxy-2-oxoglutarate aldolase, mitochondrial (327 aa).

Residues 1-25 constitute a mitochondrion transit peptide; the sequence is MLGPQVWSSVRQGLSRSLSRNVGVW. 77–78 contributes to the substrate binding site; the sequence is SN. The active-site Schiff-base intermediate with substrate is the Lys-196. Ser-198 and Gly-222 together coordinate substrate.

This sequence belongs to the DapA family. As to quaternary structure, homotetramer.

It is found in the mitochondrion. The catalysed reaction is (4S)-4-hydroxy-2-oxoglutarate = glyoxylate + pyruvate. It carries out the reaction (4R)-4-hydroxy-2-oxoglutarate = glyoxylate + pyruvate. Its activity is regulated as follows. Inhibited by divalent cations. Its function is as follows. Catalyzes the final step in the metabolic pathway of hydroxyproline. The protein is 4-hydroxy-2-oxoglutarate aldolase, mitochondrial (HOGA1) of Homo sapiens (Human).